A 147-amino-acid chain; its full sequence is Hemoglobin subunit gamma (147 aa).

Residues 3–147 (HFTAEEKAAI…VANALAYKYH (145 aa)) form the Globin domain. The heme b site is built by histidine 64 and histidine 93.

It belongs to the globin family. As to quaternary structure, heterotetramer of two alpha chains and two gamma chains in fetal hemoglobin (Hb F). As to expression, red blood cells.

Functionally, gamma chains make up the fetal hemoglobin F, in combination with alpha chains. The chain is Hemoglobin subunit gamma (HBG) from Loxodonta africana (African elephant).